The chain runs to 129 residues: Small ribosomal subunit protein uS11 (129 aa).

Belongs to the universal ribosomal protein uS11 family. As to quaternary structure, part of the 30S ribosomal subunit. Interacts with proteins S7 and S18. Binds to IF-3.

Its function is as follows. Located on the platform of the 30S subunit, it bridges several disparate RNA helices of the 16S rRNA. Forms part of the Shine-Dalgarno cleft in the 70S ribosome. The chain is Small ribosomal subunit protein uS11 from Bradyrhizobium diazoefficiens (strain JCM 10833 / BCRC 13528 / IAM 13628 / NBRC 14792 / USDA 110).